The sequence spans 834 residues: Kinesin-like protein KIF18B (834 aa).

One can recognise a Kinesin motor domain in the interval Val9–Ile353. Gly111 to Thr118 serves as a coordination point for ATP. The stretch at Ile368–Ser404 forms a coiled coil. Disordered stretches follow at residues Gln400–Ser508, Leu602–Met642, Arg655–Pro686, and Lys800–Tyr834. Positions Ser411–Leu432 are enriched in low complexity. Phosphothreonine is present on Thr431. The segment covering Glu462–Thr474 has biased composition (polar residues). Ser484 is modified (phosphoserine). Over residues Thr611 to Thr620 the composition is skewed to basic and acidic residues. A Nuclear localization signal motif is present at residues Pro619–Leu627. Residues Ser634 and Ser657 each carry the phosphoserine modification. Thr669 carries the post-translational modification Phosphothreonine. Phosphoserine is present on Ser814.

This sequence belongs to the TRAFAC class myosin-kinesin ATPase superfamily. Kinesin family. Interacts with MAPRE1; this interaction is required for efficient accumulation at microtubule plus ends. Interacts with KIF2C at microtubule tips; this interaction increases the affinity of both partners for microtubule plus ends and is required for robust microtubule depolymerization. KIF2C phosphorylation by AURKA or AURKB strongly reduces KIF18B-binding.

The protein localises to the nucleus. It localises to the cytoplasm. Its subcellular location is the cytoskeleton. Its function is as follows. In complex with KIF2C, constitutes the major microtubule plus-end depolymerizing activity in mitotic cells. Its major role may be to transport KIF2C and/or MAPRE1 along microtubules. In Mus musculus (Mouse), this protein is Kinesin-like protein KIF18B (Kif18b).